The sequence spans 1203 residues: ATP-dependent helicase/nuclease subunit A (1203 aa).

The region spanning 4–472 (VKLTPEQNEA…IRLKENFRSR (469 aa)) is the UvrD-like helicase ATP-binding domain. 25–32 (ASAGSGKT) contacts ATP. A UvrD-like helicase C-terminal domain is found at 503–785 (VQGNITDYPV…RVMTFHKSKG (283 aa)).

This sequence belongs to the helicase family. AddA subfamily. As to quaternary structure, heterodimer of AddA and AddB/RexB. Mg(2+) is required as a cofactor.

The catalysed reaction is Couples ATP hydrolysis with the unwinding of duplex DNA by translocating in the 3'-5' direction.. It catalyses the reaction ATP + H2O = ADP + phosphate + H(+). Functionally, the heterodimer acts as both an ATP-dependent DNA helicase and an ATP-dependent, dual-direction single-stranded exonuclease. Recognizes the chi site generating a DNA molecule suitable for the initiation of homologous recombination. The AddA nuclease domain is required for chi fragment generation; this subunit has the helicase and 3' -&gt; 5' nuclease activities. The sequence is that of ATP-dependent helicase/nuclease subunit A from Lactococcus lactis subsp. lactis (strain IL1403) (Streptococcus lactis).